The sequence spans 509 residues: Dihydrolipoyl dehydrogenase, mitochondrial (509 aa).

Residues 1–35 (MQSWSRVYCSLAKKGHFNRLSHGLQGASSVPLRTY) constitute a mitochondrion transit peptide. Lys66 carries the N6-acetyllysine; alternate modification. Lys66 bears the N6-succinyllysine; alternate mark. Residues 71 to 80 (EKNETLGGTC) and Lys89 contribute to the FAD site. Cys80 and Cys85 are oxidised to a cystine. An N6-acetyllysine; alternate mark is found at Lys104, Lys122, Lys132, and Lys143. N6-succinyllysine; alternate is present on residues Lys104, Lys122, Lys132, and Lys143. Position 154 (Gly154) interacts with FAD. Position 159 is an N6-succinyllysine (Lys159). 183 to 185 (TGS) is a binding site for FAD. NAD(+)-binding positions include 220 to 227 (GAGVIGVE) and Glu243. 2 positions are modified to N6-succinyllysine: Lys273 and Lys277. Val278 lines the NAD(+) pocket. A phosphoserine mark is found at Ser285 and Ser297. Gly314 contacts NAD(+). Residue Lys346 is modified to N6-acetyllysine. Residues Asp355 and 361 to 364 (MLAH) each bind FAD. Lys410 is subject to N6-acetyllysine; alternate. Lys410 is subject to N6-succinyllysine; alternate. Lys417 and Lys420 each carry N6-acetyllysine. Lys430 bears the N6-succinyllysine mark. His487 serves as the catalytic Proton acceptor. Position 502 is a phosphoserine (Ser502). Residue Lys505 is modified to N6-acetyllysine; alternate. Position 505 is an N6-succinyllysine; alternate (Lys505).

Belongs to the class-I pyridine nucleotide-disulfide oxidoreductase family. In terms of assembly, homodimer. Part of the multimeric pyruvate dehydrogenase complex that contains multiple copies of pyruvate dehydrogenase (subunits PDHA (PDHA1 or PDHA2) and PDHB, E1), dihydrolipoamide acetyltransferase (DLAT, E2) and lipoamide dehydrogenase (DLD, E3). These subunits are bound to an inner core composed of about 48 DLAT and 12 PDHX molecules (by non covalent bonds). The 2-oxoglutarate dehydrogenase complex is composed of OGDH (2-oxoglutarate dehydrogenase; E1), DLST (dihydrolipoamide succinyltransferase; E2), DLD (dihydrolipoamide dehydrogenase; E3) and the assembly factor KGD4. It contains multiple copies of the three enzymatic components (E1, E2 and E3). In the nucleus, the 2-oxoglutarate dehydrogenase complex associates with KAT2A. Interacts with PDHX. The cofactor is FAD. In terms of processing, tyrosine phosphorylated.

It localises to the mitochondrion matrix. The protein localises to the nucleus. The protein resides in the cell projection. Its subcellular location is the cilium. It is found in the flagellum. It localises to the cytoplasmic vesicle. The protein localises to the secretory vesicle. The protein resides in the acrosome. The enzyme catalyses N(6)-[(R)-dihydrolipoyl]-L-lysyl-[protein] + NAD(+) = N(6)-[(R)-lipoyl]-L-lysyl-[protein] + NADH + H(+). In terms of biological role, lipoamide dehydrogenase is a component of the glycine cleavage system as well as an E3 component of three alpha-ketoacid dehydrogenase complexes (pyruvate-, alpha-ketoglutarate-, and branched-chain amino acid-dehydrogenase complex). The 2-oxoglutarate dehydrogenase complex is mainly active in the mitochondrion. A fraction of the 2-oxoglutarate dehydrogenase complex also localizes in the nucleus and is required for lysine succinylation of histones: associates with KAT2A on chromatin and provides succinyl-CoA to histone succinyltransferase KAT2A. In monomeric form may have additional moonlighting function as serine protease. Involved in the hyperactivation of spermatazoa during capacitation and in the spermatazoal acrosome reaction. The protein is Dihydrolipoyl dehydrogenase, mitochondrial (Dld) of Rattus norvegicus (Rat).